The sequence spans 238 residues: UPF0280 protein Mboo_1274 (238 aa).

This sequence belongs to the UPF0280 family.

This Methanoregula boonei (strain DSM 21154 / JCM 14090 / 6A8) protein is UPF0280 protein Mboo_1274.